Consider the following 78-residue polypeptide: Acyl carrier protein (78 aa).

Positions 2–77 (SDIADRVKKI…DAIKFLEKNS (76 aa)) constitute a Carrier domain. An O-(pantetheine 4'-phosphoryl)serine modification is found at Ser37.

It belongs to the acyl carrier protein (ACP) family. Post-translationally, 4'-phosphopantetheine is transferred from CoA to a specific serine of apo-ACP by AcpS. This modification is essential for activity because fatty acids are bound in thioester linkage to the sulfhydryl of the prosthetic group.

It localises to the cytoplasm. It functions in the pathway lipid metabolism; fatty acid biosynthesis. Functionally, carrier of the growing fatty acid chain in fatty acid biosynthesis. This chain is Acyl carrier protein, found in Methylobacterium sp. (strain 4-46).